Reading from the N-terminus, the 333-residue chain is Phosphate acyltransferase (333 aa).

This sequence belongs to the PlsX family. In terms of assembly, homodimer. Probably interacts with PlsY.

The protein localises to the cytoplasm. The enzyme catalyses a fatty acyl-[ACP] + phosphate = an acyl phosphate + holo-[ACP]. The protein operates within lipid metabolism; phospholipid metabolism. Catalyzes the reversible formation of acyl-phosphate (acyl-PO(4)) from acyl-[acyl-carrier-protein] (acyl-ACP). This enzyme utilizes acyl-ACP as fatty acyl donor, but not acyl-CoA. This chain is Phosphate acyltransferase, found in Ligilactobacillus salivarius (strain UCC118) (Lactobacillus salivarius).